The chain runs to 189 residues: Elongation factor P (189 aa).

This sequence belongs to the elongation factor P family.

It is found in the cytoplasm. The protein operates within protein biosynthesis; polypeptide chain elongation. Functionally, involved in peptide bond synthesis. Stimulates efficient translation and peptide-bond synthesis on native or reconstituted 70S ribosomes in vitro. Probably functions indirectly by altering the affinity of the ribosome for aminoacyl-tRNA, thus increasing their reactivity as acceptors for peptidyl transferase. This is Elongation factor P from Pseudomonas putida (strain ATCC 700007 / DSM 6899 / JCM 31910 / BCRC 17059 / LMG 24140 / F1).